The primary structure comprises 595 residues: Merlin (595 aa).

At Ser-13 the chain carries Phosphoserine. Residues 22-311 (FTVRIVTMDA…GNHDLFMRRR (290 aa)) form the FERM domain. Ser-518 is modified (phosphoserine; by PAK).

As to quaternary structure, interacts with NHERF1, HGS and AGAP2. Interacts with SGSM3. Interacts (via FERM domain) with MPP1. Interacts with LAYN and WWC1. Interacts with the CUL4A-RBX1-DDB1-VprBP/DCAF1 E3 ubiquitin-protein ligase complex. The unphosphorylated form interacts (via FERM domain) with VPRBP/DCAF1. Interacts (via FERM domain) with NOP53; the interaction is direct. Interacts with SCHIP1; the interaction is direct. Phosphorylation of Ser-518 inhibits nuclear localization by disrupting the intramolecular association of the FERM domain with the C-terminal tail. Post-translationally, ubiquitinated by the CUL4A-RBX1-DDB1-DCAF1/VprBP E3 ubiquitin-protein ligase complex for ubiquitination and subsequent proteasome-dependent degradation. In terms of processing, phosphorylation of Ser-518 inhibits nuclear localization by disrupting the intramolecular association of the FERM domain with the C-terminal tail. The dephosphorylation of Ser-518 favors the interaction with NOP53.

The protein resides in the cell membrane. Its subcellular location is the cell projection. It localises to the cytoplasm. It is found in the cytoskeleton. The protein localises to the nucleus. Probable regulator of the Hippo/SWH (Sav/Wts/Hpo) signaling pathway, a signaling pathway that plays a pivotal role in tumor suppression by restricting proliferation and promoting apoptosis. Along with WWC1 can synergistically induce the phosphorylation of LATS1 and LATS2 and can probably function in the regulation of the Hippo/SWH (Sav/Wts/Hpo) signaling pathway. May act as a membrane stabilizing protein. May inhibit PI3 kinase by binding to AGAP2 and impairing its stimulating activity. Suppresses cell proliferation and tumorigenesis by inhibiting the CUL4A-RBX1-DDB1-VprBP/DCAF1 E3 ubiquitin-protein ligase complex. This is Merlin (NF2) from Papio anubis (Olive baboon).